Consider the following 396-residue polypeptide: Alanine racemase (396 aa).

The Proton acceptor; specific for D-alanine role is filled by Lys-46. Lys-46 is subject to N6-(pyridoxal phosphate)lysine. A substrate-binding site is contributed by Arg-145. The active-site Proton acceptor; specific for L-alanine is the Tyr-280. A substrate-binding site is contributed by Met-328.

Belongs to the alanine racemase family. Pyridoxal 5'-phosphate serves as cofactor.

It carries out the reaction L-alanine = D-alanine. The protein operates within amino-acid biosynthesis; D-alanine biosynthesis; D-alanine from L-alanine: step 1/1. Its function is as follows. Catalyzes the interconversion of L-alanine and D-alanine. May also act on other amino acids. In Brucella canis (strain ATCC 23365 / NCTC 10854 / RM-666), this protein is Alanine racemase (alr).